The sequence spans 701 residues: Elongation factor G 2 (701 aa).

One can recognise a tr-type G domain in the interval 8-290; that stretch reads ERYRNIGISA…AVIDYLPSPA (283 aa). GTP contacts are provided by residues 17–24, 88–92, and 142–145; these read AHIDAGKT, DTPGH, and NKMD.

It belongs to the TRAFAC class translation factor GTPase superfamily. Classic translation factor GTPase family. EF-G/EF-2 subfamily.

It localises to the cytoplasm. Catalyzes the GTP-dependent ribosomal translocation step during translation elongation. During this step, the ribosome changes from the pre-translocational (PRE) to the post-translocational (POST) state as the newly formed A-site-bound peptidyl-tRNA and P-site-bound deacylated tRNA move to the P and E sites, respectively. Catalyzes the coordinated movement of the two tRNA molecules, the mRNA and conformational changes in the ribosome. This chain is Elongation factor G 2, found in Cupriavidus pinatubonensis (strain JMP 134 / LMG 1197) (Cupriavidus necator (strain JMP 134)).